We begin with the raw amino-acid sequence, 83 residues long: Sec-independent protein translocase protein TatA (83 aa).

Residues 1–21 traverse the membrane as a helical segment; the sequence is MGGLSLPHLIVLALVVLILFG. A disordered region spans residues 34 to 83; it reads KGIKSFKQGMNDEDSKPVTPPPAQIPPASLQQTPPPAQPAPQPTSTDQAQ. Over residues 66–75 the composition is skewed to pro residues; the sequence is TPPPAQPAPQ.

Belongs to the TatA/E family. The Tat system comprises two distinct complexes: a TatABC complex, containing multiple copies of TatA, TatB and TatC subunits, and a separate TatA complex, containing only TatA subunits. Substrates initially bind to the TatABC complex, which probably triggers association of the separate TatA complex to form the active translocon.

The protein localises to the cell inner membrane. Its function is as follows. Part of the twin-arginine translocation (Tat) system that transports large folded proteins containing a characteristic twin-arginine motif in their signal peptide across membranes. TatA could form the protein-conducting channel of the Tat system. This chain is Sec-independent protein translocase protein TatA, found in Novosphingobium aromaticivorans (strain ATCC 700278 / DSM 12444 / CCUG 56034 / CIP 105152 / NBRC 16084 / F199).